Reading from the N-terminus, the 81-residue chain is Large ribosomal subunit protein bL31 (81 aa).

Belongs to the bacterial ribosomal protein bL31 family. Type A subfamily. Part of the 50S ribosomal subunit.

Functionally, binds the 23S rRNA. In Synechocystis sp. (strain ATCC 27184 / PCC 6803 / Kazusa), this protein is Large ribosomal subunit protein bL31.